Reading from the N-terminus, the 390-residue chain is Elongation factor Tu 2 (390 aa).

The region spanning 10–201 (KPHVNVGTIG…LDDYVEVPPR (192 aa)) is the tr-type G domain. Residues 19–26 (GHVDHGKT) form a G1 region. Residue 19-26 (GHVDHGKT) participates in GTP binding. Threonine 26 is a binding site for Mg(2+). A G2 region spans residues 55–59 (GITIA). The tract at residues 76 to 79 (DCPG) is G3. GTP-binding positions include 76–80 (DCPGH) and 131–134 (NKAD). Residues 131-134 (NKAD) are G4. Positions 168–170 (SAL) are G5.

The protein belongs to the TRAFAC class translation factor GTPase superfamily. Classic translation factor GTPase family. EF-Tu/EF-1A subfamily. In terms of assembly, monomer.

The protein resides in the cytoplasm. The enzyme catalyses GTP + H2O = GDP + phosphate + H(+). In terms of biological role, GTP hydrolase that promotes the GTP-dependent binding of aminoacyl-tRNA to the A-site of ribosomes during protein biosynthesis. This chain is Elongation factor Tu 2, found in Wolbachia sp. subsp. Brugia malayi (strain TRS).